We begin with the raw amino-acid sequence, 236 residues long: Probable apoptosis inhibitor 2 (236 aa).

The stretch at 85–150 (RKRSFASFKW…AHAADCAFRR (66 aa)) is one BIR repeat. Zn(2+) is bound by residues Cys123, Cys126, His142, and Cys146. The segment at 189–223 (CKVCFVNEKSVCFLPCRHLVVCAECSPRCKRCCVC) adopts an RING-type zinc-finger fold.

The protein is Probable apoptosis inhibitor 2 (IAP2) of Orgyia pseudotsugata multicapsid polyhedrosis virus (OpMNPV).